The primary structure comprises 140 residues: Large ribosomal subunit protein uL16 (140 aa).

Belongs to the universal ribosomal protein uL16 family. As to quaternary structure, part of the 50S ribosomal subunit.

Its function is as follows. Binds 23S rRNA and is also seen to make contacts with the A and possibly P site tRNAs. This is Large ribosomal subunit protein uL16 from Cytophaga hutchinsonii (strain ATCC 33406 / DSM 1761 / CIP 103989 / NBRC 15051 / NCIMB 9469 / D465).